The chain runs to 483 residues: Serine/threonine-protein phosphatase 2A regulatory subunit phr2AB (483 aa).

WD repeat units follow at residues 22–61 (SDANVVPAIEFDQTGDFIAVGDKGGKVLLLKRTHDKQSSK) and 88–129 (EIEE…IKQV). The disordered stretch occupies residues 132–152 (SATTTGPSYNGSLASNNTRSP). WD repeat units follow at residues 206-244 (AHAYHINSISLNSDGETYISSDDLRIHLWNLNINTECFN), 255-295 (DLTE…LCDN), 314-352 (EIISSISDIKFSRDGRYILSRDFLTLKLWDINMENKPVK), and 369-410 (ENDC…DVCL). The segment at 421 to 443 (TKTLTTKMKLRSSKKEPKKPEDI) is disordered. Over residues 433–443 (SKKEPKKPEDI) the composition is skewed to basic and acidic residues. The WD 7 repeat unit spans residues 449–483 (EYTKKTLHCAWHPKDNLIAVGAANTVYLYAATENK).

The protein belongs to the phosphatase 2A regulatory subunit B family. In terms of assembly, PP2A consists of a trimeric holoenzyme, composed of a 37 kDa catalytic subunit (C subunit) and a 65 kDa constant regulatory subunit (A subunit), that associates with a variety of regulatory subunits (B subunit) such as phr2AB (B55) and psrA (B56 homolog). The trimer may partially dissociates into a core 'AC' dimer equally active compared to the trimer.

The protein resides in the cytoplasm. The protein localises to the cytosol. Its subcellular location is the cytoskeleton. It is found in the microtubule organizing center. It localises to the centrosome. Functionally, the B regulatory subunit might modulate substrate selectivity and catalytic activity, and might also direct the localization of the catalytic enzyme to a particular subcellular compartment. The polypeptide is Serine/threonine-protein phosphatase 2A regulatory subunit phr2AB (phr2aB) (Dictyostelium discoideum (Social amoeba)).